Consider the following 330-residue polypeptide: Aspartate--ammonia ligase (330 aa).

It belongs to the class-II aminoacyl-tRNA synthetase family. AsnA subfamily.

Its subcellular location is the cytoplasm. It carries out the reaction L-aspartate + NH4(+) + ATP = L-asparagine + AMP + diphosphate + H(+). It participates in amino-acid biosynthesis; L-asparagine biosynthesis; L-asparagine from L-aspartate (ammonia route): step 1/1. The chain is Aspartate--ammonia ligase from Streptococcus pneumoniae serotype 19F (strain G54).